A 221-amino-acid polypeptide reads, in one-letter code: Protein-L-isoaspartate O-methyltransferase (221 aa).

Serine 64 is an active-site residue.

This sequence belongs to the methyltransferase superfamily. L-isoaspartyl/D-aspartyl protein methyltransferase family.

Its subcellular location is the cytoplasm. The catalysed reaction is [protein]-L-isoaspartate + S-adenosyl-L-methionine = [protein]-L-isoaspartate alpha-methyl ester + S-adenosyl-L-homocysteine. Functionally, catalyzes the methyl esterification of L-isoaspartyl residues in peptides and proteins that result from spontaneous decomposition of normal L-aspartyl and L-asparaginyl residues. It plays a role in the repair and/or degradation of damaged proteins. The protein is Protein-L-isoaspartate O-methyltransferase of Thermococcus sibiricus (strain DSM 12597 / MM 739).